The chain runs to 141 residues: ATP synthase epsilon chain (141 aa).

This sequence belongs to the ATPase epsilon chain family. In terms of assembly, F-type ATPases have 2 components, CF(1) - the catalytic core - and CF(0) - the membrane proton channel. CF(1) has five subunits: alpha(3), beta(3), gamma(1), delta(1), epsilon(1). CF(0) has three main subunits: a, b and c.

The protein resides in the cell inner membrane. In terms of biological role, produces ATP from ADP in the presence of a proton gradient across the membrane. The sequence is that of ATP synthase epsilon chain from Thioalkalivibrio sulfidiphilus (strain HL-EbGR7).